Reading from the N-terminus, the 86-residue chain is Neurotoxin-like protein pMD18-NTL3 (86 aa).

The signal sequence occupies residues 1–21 (MKTLLLTLVVLTIACLDLGYT). 4 disulfides stabilise this stretch: cysteine 24–cysteine 45, cysteine 38–cysteine 62, cysteine 66–cysteine 78, and cysteine 79–cysteine 84.

The protein belongs to the three-finger toxin family. Short-chain subfamily. Orphan group IX sub-subfamily. As to expression, expressed by the venom gland.

Its subcellular location is the secreted. This is Neurotoxin-like protein pMD18-NTL3 from Bungarus multicinctus (Many-banded krait).